The sequence spans 196 residues: Nitrogen regulatory protein P-II homolog (196 aa).

The transit peptide at 1–61 directs the protein to the chloroplast; sequence MAASMTKPIS…NNSRVLPVVS (61 aa). Residues 108 to 112 and 161 to 164 each bind ATP; these read GFGAQ and GDGK. Residue Gly110 coordinates Mg(2+).

This sequence belongs to the P(II) protein family. Homodimer. Interacts with NAGK. Interaction with NAGK is dependent of MgATP and inhibited by 2-oxoglutarate, arginine, glutamate, citrate, and oxaloacetate.

It is found in the plastid. Its subcellular location is the chloroplast. Functionally, participates in sensing carbon and organic nitrogen status and regulates some steps of primary carbon and nitrogen metabolism. Required for nitrite uptake in chloroplasts and regulates arginine biosynthesis through interaction with acetylglutamate kinase (NAGK) in chloroplasts. Regulates fatty acids synthesis in chloroplasts by interacting with the acetyl-CoA carboxylase complex and inhibiting acetyl-CoA carboxylase (ACCase) activity. In Arabidopsis thaliana (Mouse-ear cress), this protein is Nitrogen regulatory protein P-II homolog (GLB1).